The following is a 206-amino-acid chain: ATP phosphoribosyltransferase (206 aa).

It belongs to the ATP phosphoribosyltransferase family. Short subfamily. In terms of assembly, heteromultimer composed of HisG and HisZ subunits.

It is found in the cytoplasm. It catalyses the reaction 1-(5-phospho-beta-D-ribosyl)-ATP + diphosphate = 5-phospho-alpha-D-ribose 1-diphosphate + ATP. It participates in amino-acid biosynthesis; L-histidine biosynthesis; L-histidine from 5-phospho-alpha-D-ribose 1-diphosphate: step 1/9. Functionally, catalyzes the condensation of ATP and 5-phosphoribose 1-diphosphate to form N'-(5'-phosphoribosyl)-ATP (PR-ATP). Has a crucial role in the pathway because the rate of histidine biosynthesis seems to be controlled primarily by regulation of HisG enzymatic activity. The chain is ATP phosphoribosyltransferase from Brachyspira hyodysenteriae (strain ATCC 49526 / WA1).